The chain runs to 133 residues: Ribonuclease VapC17 (133 aa).

Residues D7 and D93 each contribute to the Mg(2+) site. The region spanning 30–118 (AICDIGELEW…HHDRDYKRIA (89 aa)) is the PINc domain.

It belongs to the PINc/VapC protein family. Requires Mg(2+) as cofactor.

Toxic component of a type II toxin-antitoxin (TA) system. An RNase. The cognate antitoxin is VapB17. In Mycobacterium tuberculosis (strain CDC 1551 / Oshkosh), this protein is Ribonuclease VapC17.